The following is a 150-amino-acid chain: Peptide deformylase (150 aa).

2 residues coordinate Fe cation: Cys88 and His130. Glu131 is a catalytic residue. His134 contributes to the Fe cation binding site.

It belongs to the polypeptide deformylase family. Fe(2+) serves as cofactor.

The catalysed reaction is N-terminal N-formyl-L-methionyl-[peptide] + H2O = N-terminal L-methionyl-[peptide] + formate. Its function is as follows. Removes the formyl group from the N-terminal Met of newly synthesized proteins. Requires at least a dipeptide for an efficient rate of reaction. N-terminal L-methionine is a prerequisite for activity but the enzyme has broad specificity at other positions. This is Peptide deformylase from Desulfitobacterium hafniense (strain Y51).